A 151-amino-acid polypeptide reads, in one-letter code: Arginine repressor (151 aa).

The protein belongs to the ArgR family.

Its subcellular location is the cytoplasm. The protein operates within amino-acid biosynthesis; L-arginine biosynthesis [regulation]. Its function is as follows. Regulates arginine biosynthesis genes. This chain is Arginine repressor, found in Clostridium novyi (strain NT).